Here is a 181-residue protein sequence, read N- to C-terminus: Protein Syd (181 aa).

The protein belongs to the Syd family.

It is found in the cell inner membrane. Its function is as follows. Interacts with the SecY protein in vivo. May bind preferentially to an uncomplexed state of SecY, thus functioning either as a chelating agent for excess SecY in the cell or as a regulatory factor that negatively controls the translocase function. This Escherichia coli O157:H7 protein is Protein Syd.